Reading from the N-terminus, the 608-residue chain is MAESIIIRVQSPDGVKRITATKRETAATFLKKVAKEFGFQNNGFSVYINRNKTGEITASSSKSLHLLKIKHGDLLFLFPSSLAGPSSEMETSTSVGLKAFGAPHVVEDEIDQYLSKQDGKIYRSRDPQLCRHGPLGKCVHCVPLEPFDEDYLNHLEPPVKHMSFHAYIRKLTGGADKGKFVALENISCKIKSGCEGHLPWPNGICTKCQPSAITLNRQKYRHVDNIMFENHTVADRFLDFWRKTGNQHFGYLYGRYTEHKDIPLGIRAEVAAIYEPPQIGTQNSLELLEDPKAEVVDEIASKLGLRKVGWIFTDLVSEDTRKGTVRYSRNKDTYFLSSEECITAGDFQNKHPNICRLSPDGHFGSKFVTAVATGGPDNQVHFEGYQVSNQCMALVRDECLLPCKDAPELGYAKESSSEQYVPDVFYKDIDKFGNEITQLARPLPVEYLIIDITTTFPKDPVYTFSISQNPFPIENRDVLGETQDFHSLATYLSQNTSSVFLDTISDFHLLLFLVTNEVMPLQDSISLLLEAVRTRNEELAQTWKKSEQWATIEQLCSTVGVQLPGLHEFGAVGGSARAATSAMWACQHCTFMNQPGTGHCEMCSLPRT.

The residue at position 2 (A2) is an N-acetylalanine. Residue K179 is modified to N6-acetyllysine. In terms of domain architecture, MPN spans 226 to 363 (IMFENHTVAD…ICRLSPDGHF (138 aa)). Residues 580–608 (TSAMWACQHCTFMNQPGTGHCEMCSLPRT) form a RanBP2-type zinc finger.

The protein belongs to the NPL4 family. As to quaternary structure, heterodimer with UFD1. The heterodimer binds ubiquitinated proteins. The heterodimer binds to VCP and inhibits Golgi membrane fusion. Interacts with ZFAND2B; probably through VCP.

It is found in the cytoplasm. It localises to the cytosol. Its subcellular location is the endoplasmic reticulum. The protein localises to the nucleus. It participates in protein degradation; proteasomal ubiquitin-dependent pathway. Functionally, the ternary complex containing UFD1, VCP and NPLOC4 binds ubiquitinated proteins and is necessary for the export of misfolded proteins from the ER to the cytoplasm, where they are degraded by the proteasome. The NPLOC4-UFD1-VCP complex regulates spindle disassembly at the end of mitosis and is necessary for the formation of a closed nuclear envelope. Acts as a negative regulator of type I interferon production via the complex formed with VCP and UFD1, which binds to RIGI and recruits RNF125 to promote ubiquitination and degradation of RIGI. This chain is Nuclear protein localization protein 4 homolog (Nploc4), found in Rattus norvegicus (Rat).